The primary structure comprises 215 residues: CASP-like protein 1E1 (215 aa).

Residues 1 to 51 (MESSRGKPGLNGSGGGAAAFDYSSRRGYYTGAGAALPPLAAGSRAPPVDPC) lie on the Cytoplasmic side of the membrane. A helical transmembrane segment spans residues 52 to 72 (CVALRVFVLLGTLASAVVMAA). The Extracellular portion of the chain corresponds to 73-103 (DRQSTTVQIAAGEQLAPPLRVPVTAKWTYSS). The chain crosses the membrane as a helical span at residues 104 to 124 (AFVYFVVANAMVFAFSAAALA). The Cytoplasmic portion of the chain corresponds to 125–130 (AVRRRS). Residues 131-151 (AVVPVMVGDLVAMALLFSAVG) form a helical membrane-spanning segment. Topologically, residues 152–185 (AAAQFGLLGERGNAHVRWAKVCDVYGPFCERAMA) are extracellular. The chain crosses the membrane as a helical span at residues 186 to 206 (AVVVALIAAFADLVLLMLTIL). At 207 to 215 (TIHKASSYY) the chain is on the cytoplasmic side.

It belongs to the Casparian strip membrane proteins (CASP) family. As to quaternary structure, homodimer and heterodimers.

The protein resides in the cell membrane. The sequence is that of CASP-like protein 1E1 from Oryza sativa subsp. indica (Rice).